A 121-amino-acid chain; its full sequence is Protein MGF 110-14L (121 aa).

A signal peptide spans 1–17 (MKVLLGLLLGYSVLILA).

This sequence belongs to the asfivirus MGF 110 family.

The polypeptide is Protein MGF 110-14L (African swine fever virus (isolate Portugal/Lis 57/1957) (ASFV)).